A 130-amino-acid chain; its full sequence is MAQVQYQGTGRRKNSVARVRLVPGTGKITMNGKPAEEYIPFANIREDMVQPFGVTETKGQYDVFVNVNGGGFSGQAGATRHGIARALLEVDPDFRGVLKSTGLLTRDARMKERKKPGLKKARKASQFSKR.

The interval 107-130 (DARMKERKKPGLKKARKASQFSKR) is disordered. Basic residues predominate over residues 111 to 130 (KERKKPGLKKARKASQFSKR).

It belongs to the universal ribosomal protein uS9 family.

In Ligilactobacillus salivarius (strain UCC118) (Lactobacillus salivarius), this protein is Small ribosomal subunit protein uS9.